The chain runs to 951 residues: Zinc fingers and homeoboxes protein 3 (951 aa).

Residues 1–66 are disordered; that stretch reads MASKRKSTTP…SSTDGSALAN (66 aa). The segment at 1-107 is required for nuclear localization; it reads MASKRKSTTP…SEHTDFNKDP (107 aa). Positions 42 to 58 are enriched in low complexity; that stretch reads PSEAPDASSEAAPNPSS. 2 C2H2-type zinc fingers span residues 77 to 100 and 109 to 132; these read YCCK…NSEH and FVCT…AKCH. Residues 227-252 form a disordered region; that stretch reads TFINGAAPGSQASAKSTKPPPAANGP. Residues 238–483 form a required for homodimerization and interaction with NFYA region; it reads ASAKSTKPPP…LLTACPSITS (246 aa). The required for repressor activity stretch occupies residues 299 to 497; sequence LSSIPTYNAA…DANIYKNKKS (199 aa). 2 consecutive DNA-binding regions (homeobox) follow at residues 300-359 and 489-548; these read SSIP…GISW and ANIY…RNLK. The required for nuclear localization stretch occupies residues 492-550; that stretch reads YKNKKSHEQLSALKGSFCRNQFPGQSEVEHLTKVTGLSTREVRKWFSDRRYHCRNLKGS. S599 bears the Phosphoserine mark. Residues 607-666 constitute a DNA-binding region (homeobox 3); sequence TPTKYKERAPEQLRVLENSFAQNPLPPEEELDRLRSETKMTRREIDGWFSERRKKVNTEE. The span at 662 to 676 shows a compositional bias: basic and acidic residues; sequence VNTEETKKADGHMPK. The disordered stretch occupies residues 662–690; the sequence is VNTEETKKADGHMPKEEEEGAEQEGRDEE. Positions 677 to 690 are enriched in acidic residues; sequence EEEEGAEQEGRDEE. Residues S703 and S718 each carry the phosphoserine modification. DNA-binding regions (homeobox) lie at residues 759 to 818 and 830 to 889; these read PSKV…KNGQ and FPPG…TRAV. Positions 916–951 are disordered; the sequence is SELSENSESWEPSAPEASSEPFDTSSPQSGRQLEAD. A compositionally biased stretch (low complexity) spans 919 to 936; that stretch reads SENSESWEPSAPEASSEP. Residues S922 and S941 each carry the phosphoserine modification. Residues 937 to 951 are compositionally biased toward polar residues; sequence FDTSSPQSGRQLEAD.

It belongs to the ZHX family. Homodimer (via homeobox domain 1). Heterodimer with ZHX1 (via homeobox domain 1). Heterodimer with ZHX2 (via homeobox domain 1). Heterodimerization with ZHX1 is a prerequisite for repressor activity. Interacts with NFYA. Ubiquitously expressed.

Its subcellular location is the nucleus. Its function is as follows. Acts as a transcriptional repressor. Involved in the early stages of mesenchymal stem cell (MSC) osteogenic differentiation. Is a regulator of podocyte gene expression during primary glomerula disease. Binds to promoter DNA. This Mus musculus (Mouse) protein is Zinc fingers and homeoboxes protein 3 (Zhx3).